The primary structure comprises 433 residues: 26S proteasome regulatory subunit 7 (433 aa).

Positions 1–22 (MPDYLGADQRKTKEDEKDDKPI) are disordered. Residues 8 to 22 (DQRKTKEDEKDDKPI) show a composition bias toward basic and acidic residues. N6-acetyllysine is present on Lys116. 216-223 (GPPGTGKT) is an ATP binding site. Residue Lys422 is modified to N6-acetyllysine.

Belongs to the AAA ATPase family. Component of the 19S proteasome regulatory particle complex. The 26S proteasome consists of a 20S core particle (CP) and two 19S regulatory subunits (RP). The regulatory particle is made of a lid composed of 9 subunits, a base containing 6 ATPases including PSMC2 and few additional components. Interacts with NDC80 and SQSTM1. Interacts with PAAF1. Interacts with TRIM5. Post-translationally, monoubiquitinated by RNF181. In terms of processing, phosphorylated. Dephosphorylated by UBLCP1 which impairs PSMC2 ATPase activity and disrupts 26S proteasome assembly.

It is found in the cytoplasm. Functionally, component of the 26S proteasome, a multiprotein complex involved in the ATP-dependent degradation of ubiquitinated proteins. This complex plays a key role in the maintenance of protein homeostasis by removing misfolded or damaged proteins, which could impair cellular functions, and by removing proteins whose functions are no longer required. Therefore, the proteasome participates in numerous cellular processes, including cell cycle progression, apoptosis, or DNA damage repair. PSMC2 belongs to the heterohexameric ring of AAA (ATPases associated with diverse cellular activities) proteins that unfolds ubiquitinated target proteins that are concurrently translocated into a proteolytic chamber and degraded into peptides. In Rattus norvegicus (Rat), this protein is 26S proteasome regulatory subunit 7 (Psmc2).